The chain runs to 250 residues: Probable transcriptional regulatory protein Ppha_0657 (250 aa).

Belongs to the TACO1 family.

It localises to the cytoplasm. In Pelodictyon phaeoclathratiforme (strain DSM 5477 / BU-1), this protein is Probable transcriptional regulatory protein Ppha_0657.